Consider the following 570-residue polypeptide: Proline--tRNA ligase (570 aa).

It belongs to the class-II aminoacyl-tRNA synthetase family. ProS type 1 subfamily. As to quaternary structure, homodimer.

The protein resides in the cytoplasm. The enzyme catalyses tRNA(Pro) + L-proline + ATP = L-prolyl-tRNA(Pro) + AMP + diphosphate. Functionally, catalyzes the attachment of proline to tRNA(Pro) in a two-step reaction: proline is first activated by ATP to form Pro-AMP and then transferred to the acceptor end of tRNA(Pro). As ProRS can inadvertently accommodate and process non-cognate amino acids such as alanine and cysteine, to avoid such errors it has two additional distinct editing activities against alanine. One activity is designated as 'pretransfer' editing and involves the tRNA(Pro)-independent hydrolysis of activated Ala-AMP. The other activity is designated 'posttransfer' editing and involves deacylation of mischarged Ala-tRNA(Pro). The misacylated Cys-tRNA(Pro) is not edited by ProRS. In Neisseria gonorrhoeae (strain ATCC 700825 / FA 1090), this protein is Proline--tRNA ligase.